The following is an 84-amino-acid chain: MKVTLIAILTCAAVLVLHTTAAEELEESQLMEVGMPDTELAAVDEERLFECSVSCEIEKEGNKDCKKKKCKGGWKCKFNICVKV.

The N-terminal stretch at 1–22 (MKVTLIAILTCAAVLVLHTTAA) is a signal peptide. Residues 23-47 (EELEESQLMEVGMPDTELAAVDEER) constitute a propeptide that is removed on maturation. Intrachain disulfides connect C51/C65, C55/C76, and C70/C81.

It belongs to the neurotoxin 12 (Hwtx-2) family. 02 (Hwtx-2) subfamily. As to expression, expressed by the venom gland.

It localises to the secreted. Postsynaptic neurotoxin. The protein is U4-theraphotoxin-Hhn1ac of Cyriopagopus hainanus (Chinese bird spider).